A 96-amino-acid polypeptide reads, in one-letter code: uncharacterized protein (96 aa).

Residues 1–28 (MNKKAIVGIFMSILMAGLVGCAGSSDAQ) form the signal peptide.

This is an uncharacterized protein from Butyrivibrio fibrisolvens.